The sequence spans 92 residues: Large ribosomal subunit protein bL34m (92 aa).

The N-terminal 46 residues, 1–46 (MAVLAGSLLGPTSRSAALLGGRWLQPRAWLGFPDAWGLPTPQQARG), are a transit peptide targeting the mitochondrion. Ser71 carries the phosphoserine modification.

This sequence belongs to the bacterial ribosomal protein bL34 family. In terms of assembly, component of the mitochondrial large ribosomal subunit (mt-LSU). Mature mammalian 55S mitochondrial ribosomes consist of a small (28S) and a large (39S) subunit. The 28S small subunit contains a 12S ribosomal RNA (12S mt-rRNA) and 30 different proteins. The 39S large subunit contains a 16S rRNA (16S mt-rRNA), a copy of mitochondrial valine transfer RNA (mt-tRNA(Val)), which plays an integral structural role, and 52 different proteins.

Its subcellular location is the mitochondrion. The protein is Large ribosomal subunit protein bL34m (MRPL34) of Homo sapiens (Human).